The following is a 356-amino-acid chain: Guanine nucleotide-binding protein alpha-15 subunit (356 aa).

Gly2 carries the N-myristoyl glycine lipid modification. Residue Cys5 is the site of S-palmitoyl cysteine attachment. A G-alpha domain is found at 33–356 (GNQKLLLLGT…GRNLRGTGME (324 aa)). A G1 motif region spans residues 36–49 (KLLLLGTGECGKST). Residues 41-48 (GTGECGKS), 177-183 (LRIRIPT), 202-206 (DVGGQ), 271-274 (NKRD), and Ala328 each bind GTP. Mg(2+) contacts are provided by Ser48 and Thr183. Residues 175 to 183 (DMLRIRIPT) are G2 motif. The G3 motif stretch occupies residues 198-207 (FRIYDVGGQR). The segment at 267–274 (ILFLNKRD) is G4 motif. Residues 326–331 (TCATDT) form a G5 motif region.

Belongs to the G-alpha family. G proteins are composed of 3 units; alpha, beta and gamma. The alpha chain contains the guanine nucleotide binding site.

Guanine nucleotide-binding proteins (G proteins) are involved as modulators or transducers in various transmembrane signaling systems. The polypeptide is Guanine nucleotide-binding protein alpha-15 subunit (gpa-15) (Caenorhabditis elegans).